Consider the following 314-residue polypeptide: Dual specificity protein phosphatase 2 (314 aa).

Residues 23–144 (EAERTLLLDC…FQGCCPDLCS (122 aa)) enclose the Rhodanese domain. Residues 172 to 313 (GPVEILPYLF…LLQFETQVLC (142 aa)) enclose the Tyrosine-protein phosphatase domain. The active-site Phosphocysteine intermediate is the Cys257.

It belongs to the protein-tyrosine phosphatase family. Non-receptor class dual specificity subfamily. In terms of assembly, interacts with MAPK14; this interaction does not lead to catalytic activation of DUSP2 and dephosphrylation of MAPK14. In terms of tissue distribution, expressed in hematopoietic tissues.

Its subcellular location is the nucleus. The catalysed reaction is O-phospho-L-tyrosyl-[protein] + H2O = L-tyrosyl-[protein] + phosphate. It catalyses the reaction O-phospho-L-threonyl-[protein] + H2O = L-threonyl-[protein] + phosphate. Dephosphorylates both phosphorylated Thr and Tyr residues in MAPK1, and dephosphorylation of phosphotyrosine is slightly faster than that of phosphothreonine. Can dephosphorylate MAPK1. The polypeptide is Dual specificity protein phosphatase 2 (Homo sapiens (Human)).